The following is a 279-amino-acid chain: NADPH-dependent 7-cyano-7-deazaguanine reductase (279 aa).

Residue 86–88 coordinates substrate; it reads IES. 88-89 is a binding site for NADPH; sequence SK. The active-site Thioimide intermediate is cysteine 187. Aspartate 194 acts as the Proton donor in catalysis. A substrate-binding site is contributed by 226–227; sequence HE. 255 to 256 provides a ligand contact to NADPH; it reads RG.

This sequence belongs to the GTP cyclohydrolase I family. QueF type 2 subfamily. As to quaternary structure, homodimer.

The protein resides in the cytoplasm. It carries out the reaction 7-aminomethyl-7-carbaguanine + 2 NADP(+) = 7-cyano-7-deazaguanine + 2 NADPH + 3 H(+). The protein operates within tRNA modification; tRNA-queuosine biosynthesis. Catalyzes the NADPH-dependent reduction of 7-cyano-7-deazaguanine (preQ0) to 7-aminomethyl-7-deazaguanine (preQ1). This chain is NADPH-dependent 7-cyano-7-deazaguanine reductase, found in Pasteurella multocida (strain Pm70).